Reading from the N-terminus, the 408-residue chain is 4-hydroxy-3-methylbut-2-en-1-yl diphosphate synthase (ferredoxin) (408 aa).

A compositionally biased stretch (polar residues) spans 1 to 21; it reads MQTLPTPTTSSNTANQSTFDT. A disordered region spans residues 1–26; sequence MQTLPTPTTSSNTANQSTFDTTIKRR. [4Fe-4S] cluster contacts are provided by cysteine 317, cysteine 320, cysteine 351, and glutamate 358.

The protein belongs to the IspG family. It depends on [4Fe-4S] cluster as a cofactor.

The catalysed reaction is (2E)-4-hydroxy-3-methylbut-2-enyl diphosphate + 2 oxidized [2Fe-2S]-[ferredoxin] + H2O = 2-C-methyl-D-erythritol 2,4-cyclic diphosphate + 2 reduced [2Fe-2S]-[ferredoxin] + H(+). The protein operates within isoprenoid biosynthesis; isopentenyl diphosphate biosynthesis via DXP pathway; isopentenyl diphosphate from 1-deoxy-D-xylulose 5-phosphate: step 5/6. Functionally, converts 2C-methyl-D-erythritol 2,4-cyclodiphosphate (ME-2,4cPP) into 1-hydroxy-2-methyl-2-(E)-butenyl 4-diphosphate. The chain is 4-hydroxy-3-methylbut-2-en-1-yl diphosphate synthase (ferredoxin) from Trichormus variabilis (strain ATCC 29413 / PCC 7937) (Anabaena variabilis).